Here is a 137-residue protein sequence, read N- to C-terminus: Small heat shock protein IbpA (137 aa).

Residues 28–137 (SQSNGGYPPY…AKKPRRIEIN (110 aa)) enclose the sHSP domain.

This sequence belongs to the small heat shock protein (HSP20) family. As to quaternary structure, monomer. Forms homomultimers of about 100-150 subunits at optimal growth temperatures. Conformation changes to monomers at high temperatures or high ionic concentrations.

It is found in the cytoplasm. Associates with aggregated proteins, together with IbpB, to stabilize and protect them from irreversible denaturation and extensive proteolysis during heat shock and oxidative stress. Aggregated proteins bound to the IbpAB complex are more efficiently refolded and reactivated by the ATP-dependent chaperone systems ClpB and DnaK/DnaJ/GrpE. Its activity is ATP-independent. This Shigella sonnei (strain Ss046) protein is Small heat shock protein IbpA.